The sequence spans 434 residues: Trigger factor (434 aa).

The PPIase FKBP-type domain occupies 160–245 (GDKVKMNFVG…LTEVQAANLP (86 aa)).

The protein belongs to the FKBP-type PPIase family. Tig subfamily.

Its subcellular location is the cytoplasm. The enzyme catalyses [protein]-peptidylproline (omega=180) = [protein]-peptidylproline (omega=0). Its function is as follows. Involved in protein export. Acts as a chaperone by maintaining the newly synthesized protein in an open conformation. Functions as a peptidyl-prolyl cis-trans isomerase. The polypeptide is Trigger factor (Shewanella sp. (strain W3-18-1)).